The primary structure comprises 209 residues: Claudin-4 (209 aa).

Over Met1–Thr9 the chain is Cytoplasmic. The tract at residues Met1 to Lys103 is interaction with EPHA2. Residues Gly10–Trp30 traverse the membrane as a helical segment. At Arg31–Arg81 the chain is on the extracellular side. Cys54 and Cys64 are joined by a disulfide. A helical transmembrane segment spans residues Ala82–Gly102. Residues Lys103–Thr117 are Cytoplasmic-facing. The helical transmembrane segment at Met118–Trp138 threads the bilayer. Over Thr139 to Met160 the chain is Extracellular. A helical membrane pass occupies residues Gly161–Leu181. Residues Cys182–Val209 lie on the Cytoplasmic side of the membrane. Tyr208 is subject to Phosphotyrosine; by EPHA2. Residues Tyr208–Val209 are interactions with TJP1, TJP2 and TJP3.

Belongs to the claudin family. In terms of assembly, interacts with EPHA2; phosphorylates CLDN4 and may regulate tight junctions. Directly interacts with TJP1/ZO-1, TJP2/ZO-2 and TJP3/ZO-3. Interacts with CLDN1. Interacts with CLDN8. Post-translationally, phosphorylated. Phosphorylation by EPHA2 is stimulated by EFNA1 and alters interaction with TJP1.

The protein localises to the cell junction. It is found in the tight junction. It localises to the cell membrane. Its function is as follows. Channel-forming tight junction protein that mediates paracellular chloride transport in the kidney. Plays a critical role in the paracellular reabsorption of filtered chloride in the kidney collecting ducts. Claudins play a major role in tight junction-specific obliteration of the intercellular space, through calcium-independent cell-adhesion activity. The chain is Claudin-4 (CLDN4) from Chlorocebus aethiops (Green monkey).